The primary structure comprises 451 residues: Phosphoglucosamine mutase (451 aa).

The active-site Phosphoserine intermediate is Ser101. Residues Ser101, Asp240, Asp242, and Asp244 each contribute to the Mg(2+) site. Position 101 is a phosphoserine (Ser101).

This sequence belongs to the phosphohexose mutase family. The cofactor is Mg(2+). Activated by phosphorylation.

The catalysed reaction is alpha-D-glucosamine 1-phosphate = D-glucosamine 6-phosphate. Its function is as follows. Catalyzes the conversion of glucosamine-6-phosphate to glucosamine-1-phosphate. The polypeptide is Phosphoglucosamine mutase (Alkalilimnicola ehrlichii (strain ATCC BAA-1101 / DSM 17681 / MLHE-1)).